Reading from the N-terminus, the 215-residue chain is MGLAGVCVLRRSAGYILGGAARQSVAATAAARRRSEGGWASGGVRSFSRAAAAMAPIKVGDAIPAVEVFEGEPGNKVNLAELFKGKKGVLFGVPGAFTPGCSKTHLPGFVEQAEALKAKGVQVLACLSVNDAFVTGEWGRAHKAEGKVRLLADPTGAFGKETDLLLDDSLVSIFGNRRLKRFSMVVQDGIVKALNVEPDGTGLTCSLAPSIISQL.

A mitochondrion-targeting transit peptide spans 1-53 (MGLAGVCVLRRSAGYILGGAARQSVAATAAARRRSEGGWASGGVRSFSRAAAA). The 159-residue stretch at 57–215 (IKVGDAIPAV…SLAPSIISQL (159 aa)) folds into the Thioredoxin domain. The residue at position 76 (K76) is an N6-acetyllysine. Residue K84 is modified to N6-acetyllysine; alternate. An N6-succinyllysine; alternate modification is found at K84. C101 (cysteine sulfenic acid (-SOH) intermediate) is an active-site residue. The S-palmitoyl cysteine moiety is linked to residue C101. A disulfide bridge connects residues C101 and C205. At K117 the chain carries N6-succinyllysine. Phosphoserine is present on residues S172 and S183. The Microbody targeting signal motif lies at 213–215 (SQL).

The protein belongs to the peroxiredoxin family. Prx5 subfamily. As to quaternary structure, monomer. Post-translationally, S-palmitoylated. Palmitoylation occurs on the active site, inhibiting its reactivity; therefore PRDX5 palmitoylation status determines its antioxidant capacity. In terms of processing, S-palmitoylated. Depalmitoylated by ABHD10.

Its subcellular location is the mitochondrion. It localises to the cytoplasm. The protein resides in the peroxisome matrix. It catalyses the reaction a hydroperoxide + [thioredoxin]-dithiol = an alcohol + [thioredoxin]-disulfide + H2O. Thiol-specific peroxidase that catalyzes the reduction of hydrogen peroxide and organic hydroperoxides to water and alcohols, respectively. Plays a role in cell protection against oxidative stress by detoxifying peroxides and as sensor of hydrogen peroxide-mediated signaling events. This Chlorocebus aethiops (Green monkey) protein is Peroxiredoxin-5, mitochondrial (PRDX5).